Here is a 480-residue protein sequence, read N- to C-terminus: Endothelial transcription factor GATA-2 (480 aa).

Ser-73 is modified (phosphoserine). Arg-86 carries the asymmetric dimethylarginine modification. Residues 166-208 form a disordered region; the sequence is SGSHLFGFPPTPPKEVSPDPSTTGAASPASSSAGGSVARGEDK. Low complexity predominate over residues 183–201; it reads PDPSTTGAASPASSSAGGS. Ser-192 carries the post-translational modification Phosphoserine. 2 GATA-type zinc fingers span residues 295–319 and 349–373; these read CVNCGATATPLWRRDGTGHYLCNAC and CANCQTTTTTLWRRNANGDPVCNAC. Residue Lys-389 forms a Glycyl lysine isopeptide (Lys-Gly) (interchain with G-Cter in SUMO2) linkage. The segment at 457–480 is disordered; it reads TPIHPSSSLSFGHPHPSSMVTAMG.

As to quaternary structure, interacts with BRD3. Interacts with AR and CCAR1. Interacts with MDFIC.

It localises to the nucleus. In terms of biological role, transcriptional activator which regulates endothelin-1 gene expression in endothelial cells. Binds to the consensus sequence 5'-AGATAG-3'. The chain is Endothelial transcription factor GATA-2 (Gata2) from Mus musculus (Mouse).